The chain runs to 340 residues: Ketol-acid reductoisomerase (NADP(+)) (340 aa).

A KARI N-terminal Rossmann domain is found at 2 to 181 (VKMYYEADVK…GCTKAGVIET (180 aa)). Residues 25 to 28 (YGSQ), Arg-48, Ser-52, and 82 to 85 (DERQ) contribute to the NADP(+) site. The active site involves His-107. Gly-133 serves as a coordination point for NADP(+). The KARI C-terminal knotted domain maps to 182–327 (SFREETETDL…EQLRGMMSWI (146 aa)). Asp-190, Glu-194, Glu-226, and Glu-230 together coordinate Mg(2+). Ser-251 contributes to the substrate binding site.

The protein belongs to the ketol-acid reductoisomerase family. Mg(2+) serves as cofactor.

It carries out the reaction (2R)-2,3-dihydroxy-3-methylbutanoate + NADP(+) = (2S)-2-acetolactate + NADPH + H(+). It catalyses the reaction (2R,3R)-2,3-dihydroxy-3-methylpentanoate + NADP(+) = (S)-2-ethyl-2-hydroxy-3-oxobutanoate + NADPH + H(+). The protein operates within amino-acid biosynthesis; L-isoleucine biosynthesis; L-isoleucine from 2-oxobutanoate: step 2/4. It functions in the pathway amino-acid biosynthesis; L-valine biosynthesis; L-valine from pyruvate: step 2/4. In terms of biological role, involved in the biosynthesis of branched-chain amino acids (BCAA). Catalyzes an alkyl-migration followed by a ketol-acid reduction of (S)-2-acetolactate (S2AL) to yield (R)-2,3-dihydroxy-isovalerate. In the isomerase reaction, S2AL is rearranged via a Mg-dependent methyl migration to produce 3-hydroxy-3-methyl-2-ketobutyrate (HMKB). In the reductase reaction, this 2-ketoacid undergoes a metal-dependent reduction by NADPH to yield (R)-2,3-dihydroxy-isovalerate. This chain is Ketol-acid reductoisomerase (NADP(+)), found in Brevibacillus brevis (strain 47 / JCM 6285 / NBRC 100599).